The primary structure comprises 43 residues: Cytin chain A (43 aa).

Belongs to the protease inhibitor I13 (potato type I serine protease inhibitor) family. As to quaternary structure, heterodimer of an A chain and a B chain, linked by a disulfide bond.

Functionally, inhibitor of chymotrypsin. The polypeptide is Cytin chain A (Theromyzon tessulatum (Duck leech)).